We begin with the raw amino-acid sequence, 156 residues long: MSDSNDDRPFRPFQSQYRWPGVDLLAYKEEGSAPFRSVTRQVLFSGNGLTGELRYFEVGPGGHSTLERHQHAHGVMILKGRGHAMVGRAVSAVAPYDLVTIPGWSWHQFRAPADEALGFLCMVNAERDKPQLPTEADLAMLRADDAVAAFLDGLAG.

In terms of domain architecture, Cupin type-2 spans 55–122; that stretch reads YFEVGPGGHS…ADEALGFLCM (68 aa). Mn(2+)-binding residues include Glu67, His69, His73, and His107. Cys121 is a catalytic residue.

It catalyses the reaction S-methyl-1-thio-D-xylulose 5-phosphate + glutathione = S-(methylsulfanyl)glutathione + 1-deoxy-D-xylulose 5-phosphate. The enzyme catalyses S-(methylsulfanyl)glutathione + AH2 = methanethiol + glutathione + A. It functions in the pathway amino-acid biosynthesis; L-methionine biosynthesis via salvage pathway. Its pathway is metabolic intermediate biosynthesis; 1-deoxy-D-xylulose 5-phosphate biosynthesis. Functionally, catalyzes the formation of S-(methylsulfanyl)glutathione and 1-deoxy-D-xylulose 5-phosphate (DXP) from 1-methylthioxylulose 5-phosphate (MTXu-5P). The S-(methylsulfanyl)glutathione is reductively cleaved to relase methanethiol in a second reaction. Involved in the MTA-isoprenoid shunt of the methionine salvage pathway. In Rhodospirillum rubrum (strain ATCC 11170 / ATH 1.1.1 / DSM 467 / LMG 4362 / NCIMB 8255 / S1), this protein is 1-methylthio-D-xylulose 5-phosphate methylsulfurylase.